The chain runs to 185 residues: uncharacterized protein (185 aa).

Residues 9 to 169 (VILELAKESD…NGREDDKPLL (161 aa)) enclose the N-acetyltransferase domain.

This is an uncharacterized protein from Bacillus subtilis (strain 168).